Consider the following 272-residue polypeptide: 1,4-dihydroxy-2-naphthoyl-CoA synthase (272 aa).

Substrate is bound by residues Arg33, 72-76, Tyr84, 116-120, Thr142, Ser148, Tyr245, and Lys260; these read SGGDQ and YAIGG. Residue 141–143 participates in hydrogencarbonate binding; that stretch reads QTG.

Belongs to the enoyl-CoA hydratase/isomerase family. MenB subfamily. The cofactor is hydrogencarbonate.

The enzyme catalyses 2-succinylbenzoyl-CoA + H(+) = 1,4-dihydroxy-2-naphthoyl-CoA + H2O. It participates in quinol/quinone metabolism; 1,4-dihydroxy-2-naphthoate biosynthesis; 1,4-dihydroxy-2-naphthoate from chorismate: step 6/7. The protein operates within quinol/quinone metabolism; menaquinone biosynthesis. Its function is as follows. Converts o-succinylbenzoyl-CoA (OSB-CoA) to 1,4-dihydroxy-2-naphthoyl-CoA (DHNA-CoA). In Staphylococcus epidermidis (strain ATCC 35984 / DSM 28319 / BCRC 17069 / CCUG 31568 / BM 3577 / RP62A), this protein is 1,4-dihydroxy-2-naphthoyl-CoA synthase.